We begin with the raw amino-acid sequence, 287 residues long: Ribonuclease Z (287 aa).

7 residues coordinate Zn(2+): His-64, His-66, Asp-68, His-69, His-124, Asp-191, and His-250. Residue Asp-68 is the Proton acceptor of the active site.

Belongs to the RNase Z family. As to quaternary structure, homodimer. The cofactor is Zn(2+).

The catalysed reaction is Endonucleolytic cleavage of RNA, removing extra 3' nucleotides from tRNA precursor, generating 3' termini of tRNAs. A 3'-hydroxy group is left at the tRNA terminus and a 5'-phosphoryl group is left at the trailer molecule.. In terms of biological role, zinc phosphodiesterase, which displays some tRNA 3'-processing endonuclease activity. Probably involved in tRNA maturation, by removing a 3'-trailer from precursor tRNA. In Pyrobaculum aerophilum (strain ATCC 51768 / DSM 7523 / JCM 9630 / CIP 104966 / NBRC 100827 / IM2), this protein is Ribonuclease Z.